The primary structure comprises 161 residues: Cyclic pyranopterin monophosphate synthase (161 aa).

Substrate-binding positions include 75 to 77 (MCH) and 114 to 115 (ME). Asp-129 is a catalytic residue.

The protein belongs to the MoaC family. In terms of assembly, homohexamer; trimer of dimers.

The catalysed reaction is (8S)-3',8-cyclo-7,8-dihydroguanosine 5'-triphosphate = cyclic pyranopterin phosphate + diphosphate. It participates in cofactor biosynthesis; molybdopterin biosynthesis. Functionally, catalyzes the conversion of (8S)-3',8-cyclo-7,8-dihydroguanosine 5'-triphosphate to cyclic pyranopterin monophosphate (cPMP). This Staphylococcus carnosus (strain TM300) protein is Cyclic pyranopterin monophosphate synthase.